Here is a 229-residue protein sequence, read N- to C-terminus: Ribose-5-phosphate isomerase A (229 aa).

Substrate contacts are provided by residues 28 to 31 (TGST), 85 to 88 (DGAD), and 98 to 101 (KGRG). Catalysis depends on Glu107, which acts as the Proton acceptor. Lys125 serves as a coordination point for substrate.

This sequence belongs to the ribose 5-phosphate isomerase family. In terms of assembly, homodimer.

It carries out the reaction aldehydo-D-ribose 5-phosphate = D-ribulose 5-phosphate. The protein operates within carbohydrate degradation; pentose phosphate pathway; D-ribose 5-phosphate from D-ribulose 5-phosphate (non-oxidative stage): step 1/1. Catalyzes the reversible conversion of ribose-5-phosphate to ribulose 5-phosphate. This Pyrococcus abyssi (strain GE5 / Orsay) protein is Ribose-5-phosphate isomerase A.